A 239-amino-acid chain; its full sequence is dITP/XTP pyrophosphatase (239 aa).

Threonine 7–lysine 12 contacts substrate. Aspartate 74 serves as the catalytic Proton acceptor. Aspartate 74 contributes to the Mg(2+) binding site. Residues serine 75, phenylalanine 182–aspartate 185, lysine 214, and histidine 219–arginine 220 contribute to the substrate site.

This sequence belongs to the HAM1 NTPase family. In terms of assembly, homodimer. Requires Mg(2+) as cofactor.

It carries out the reaction XTP + H2O = XMP + diphosphate + H(+). It catalyses the reaction dITP + H2O = dIMP + diphosphate + H(+). The catalysed reaction is ITP + H2O = IMP + diphosphate + H(+). Pyrophosphatase that catalyzes the hydrolysis of nucleoside triphosphates to their monophosphate derivatives, with a high preference for the non-canonical purine nucleotides XTP (xanthosine triphosphate), dITP (deoxyinosine triphosphate) and ITP. Seems to function as a house-cleaning enzyme that removes non-canonical purine nucleotides from the nucleotide pool, thus preventing their incorporation into DNA/RNA and avoiding chromosomal lesions. The polypeptide is dITP/XTP pyrophosphatase (Bifidobacterium animalis subsp. lactis (strain AD011)).